The sequence spans 258 residues: Imidazole glycerol phosphate synthase subunit HisF (258 aa).

Catalysis depends on residues Asp-11 and Asp-130.

The protein belongs to the HisA/HisF family. As to quaternary structure, heterodimer of HisH and HisF.

Its subcellular location is the cytoplasm. It catalyses the reaction 5-[(5-phospho-1-deoxy-D-ribulos-1-ylimino)methylamino]-1-(5-phospho-beta-D-ribosyl)imidazole-4-carboxamide + L-glutamine = D-erythro-1-(imidazol-4-yl)glycerol 3-phosphate + 5-amino-1-(5-phospho-beta-D-ribosyl)imidazole-4-carboxamide + L-glutamate + H(+). It functions in the pathway amino-acid biosynthesis; L-histidine biosynthesis; L-histidine from 5-phospho-alpha-D-ribose 1-diphosphate: step 5/9. Its function is as follows. IGPS catalyzes the conversion of PRFAR and glutamine to IGP, AICAR and glutamate. The HisF subunit catalyzes the cyclization activity that produces IGP and AICAR from PRFAR using the ammonia provided by the HisH subunit. The protein is Imidazole glycerol phosphate synthase subunit HisF of Bradyrhizobium sp. (strain BTAi1 / ATCC BAA-1182).